A 404-amino-acid chain; its full sequence is Interferon-activable protein 205-A (404 aa).

The region spanning 1–88 (MENEYKRLVL…AEILKKERSE (88 aa)) is the Pyrin domain. The disordered stretch occupies residues 85–198 (ERSEVTEETS…KSQPQNQNIP (114 aa)). Composition is skewed to low complexity over residues 102–112 (ASPATPTSTTS) and 122–132 (TSTTQEETSTA). Positions 137–147 (GMSEEKTDVKK) are enriched in basic and acidic residues. A compositionally biased stretch (low complexity) spans 168 to 185 (QSPISQVSSSASSNIPSA). Residues 186-197 (KNQKSQPQNQNI) show a composition bias toward polar residues. The region spanning 192–392 (PQNQNIPRGA…CGDHSFVKVT (201 aa)) is the HIN-200 domain.

It belongs to the HIN-200 family.

The protein resides in the nucleus. May act as a transcriptional regulator in the myeloid lineage. Inhibits cell growth via p53/TP53 and RB1-dependent and independent pathways. This is Interferon-activable protein 205-A (Ifi205a) from Mus musculus (Mouse).